The following is a 564-amino-acid chain: MSEITLGRYVFERIKQVGVNTIFGLPGDFNLSLLDKIYEVEGLRWAASLNELNAAYAADGYSRIKGLGVIITTFGVGELSALNGIAGAYAEHVGVLHIVGVPSLASQAKQLLLHHTLGNGDFDVFHRMSANISETTAMITDLAAAPAEIDRCIRTAYIAQRPVYLGLPANLVDLNVPAKLLETKIDLALKANDAEAENEVVETILALVADAKNPVILSDACASRHNVKAEVKQLIDATQFPAFVTPLGKGSIDEKHPRFGGVYVGTLSSPEVKQSVESADLILSVGALLSDFNTGSFSYSYQTKNIVEFHSDYIKIKNASFPGVQMKFVLEKLIAKVGAKIANYSPVPVPAGLPKNAPVADSTPLAQEWLWNELGEFLEEGDIVVTETGTSAFGINQTRFPTDAYGISQVLWGSIGYSVGAMVGATFAAEELDKAKRVILFVGDGSLQLTVQEIACLIRWGLKPYIFVLNNNGYTIEKLIHGPTAQYNMIQNWKQLRYLTNFGATDYEAIPVKTVGEWKKLTADPAFKKNSTIRLIEVFLPEMDAPSSLVAQANLTAAINAKQD.

Pyruvate is bound by residues Asp28 and His115. Thiamine diphosphate-binding positions include Thr390 and 413-415; that span reads GSI. Asp444 serves as a coordination point for Mg(2+). Residues 445–446 and 471–476 each bind thiamine diphosphate; these read GS and NNGYTI. Positions 471 and 473 each coordinate Mg(2+). Glu477 provides a ligand contact to pyruvate.

This sequence belongs to the TPP enzyme family. In terms of assembly, homotetramer. Requires Mg(2+) as cofactor. Thiamine diphosphate is required as a cofactor.

It catalyses the reaction a 2-oxocarboxylate + H(+) = an aldehyde + CO2. The enzyme catalyses pyruvate + H(+) = acetaldehyde + CO2. In Hanseniaspora uvarum (Yeast), this protein is Pyruvate decarboxylase (PDC).